The primary structure comprises 277 residues: 3-methyl-2-oxobutanoate hydroxymethyltransferase (277 aa).

Residues aspartate 49 and aspartate 88 each coordinate Mg(2+). Residues 49–50 (DS), aspartate 88, and lysine 118 each bind 3-methyl-2-oxobutanoate. A Mg(2+)-binding site is contributed by glutamate 120. Glutamate 186 serves as the catalytic Proton acceptor.

This sequence belongs to the PanB family. As to quaternary structure, homodecamer; pentamer of dimers. Requires Mg(2+) as cofactor.

The protein localises to the cytoplasm. The catalysed reaction is 3-methyl-2-oxobutanoate + (6R)-5,10-methylene-5,6,7,8-tetrahydrofolate + H2O = 2-dehydropantoate + (6S)-5,6,7,8-tetrahydrofolate. It participates in cofactor biosynthesis; (R)-pantothenate biosynthesis; (R)-pantoate from 3-methyl-2-oxobutanoate: step 1/2. In terms of biological role, catalyzes the reversible reaction in which hydroxymethyl group from 5,10-methylenetetrahydrofolate is transferred onto alpha-ketoisovalerate to form ketopantoate. The polypeptide is 3-methyl-2-oxobutanoate hydroxymethyltransferase (Cereibacter sphaeroides (strain ATCC 17025 / ATH 2.4.3) (Rhodobacter sphaeroides)).